The chain runs to 273 residues: Phosphate import ATP-binding protein PstB (273 aa).

An ABC transporter domain is found at 26 to 268 (MRGEKVCVFY…PTEKRTQDYI (243 aa)). 58–65 (GPSGCGKS) provides a ligand contact to ATP.

It belongs to the ABC transporter superfamily. Phosphate importer (TC 3.A.1.7) family. The complex is composed of two ATP-binding proteins (PstB), two transmembrane proteins (PstC and PstA) and a solute-binding protein (PstS).

It is found in the cell inner membrane. It carries out the reaction phosphate(out) + ATP + H2O = ADP + 2 phosphate(in) + H(+). Functionally, part of the ABC transporter complex PstSACB involved in phosphate import. Responsible for energy coupling to the transport system. The sequence is that of Phosphate import ATP-binding protein PstB from Brucella abortus (strain 2308).